Reading from the N-terminus, the 859-residue chain is Leucine--tRNA ligase (859 aa).

Positions 42-52 (PYPSGRLHMGH) match the 'HIGH' region motif. The short motif at 618-622 (KMSKS) is the 'KMSKS' region element. Lys-621 contacts ATP.

It belongs to the class-I aminoacyl-tRNA synthetase family.

Its subcellular location is the cytoplasm. The enzyme catalyses tRNA(Leu) + L-leucine + ATP = L-leucyl-tRNA(Leu) + AMP + diphosphate. This Shewanella sp. (strain MR-4) protein is Leucine--tRNA ligase.